Consider the following 348-residue polypeptide: DNA-directed RNA polymerase subunit alpha (348 aa).

The alpha N-terminal domain (alpha-NTD) stretch occupies residues methionine 1–aspartate 243. The interval valine 260–alanine 348 is alpha C-terminal domain (alpha-CTD).

The protein belongs to the RNA polymerase alpha chain family. In terms of assembly, homodimer. The RNAP catalytic core consists of 2 alpha, 1 beta, 1 beta' and 1 omega subunit. When a sigma factor is associated with the core the holoenzyme is formed, which can initiate transcription.

The enzyme catalyses RNA(n) + a ribonucleoside 5'-triphosphate = RNA(n+1) + diphosphate. DNA-dependent RNA polymerase catalyzes the transcription of DNA into RNA using the four ribonucleoside triphosphates as substrates. In Oleidesulfovibrio alaskensis (strain ATCC BAA-1058 / DSM 17464 / G20) (Desulfovibrio alaskensis), this protein is DNA-directed RNA polymerase subunit alpha.